The sequence spans 222 residues: CEACAM1-like protein UL7 (222 aa).

12 N-linked (GlcNAc...) asparagine; by host glycosylation sites follow: Asn-50, Asn-56, Asn-60, Asn-71, Asn-105, Asn-109, Asn-125, Asn-132, Asn-147, Asn-164, Asn-168, and Asn-189. The helical transmembrane segment at 193 to 213 (LALVGVVVFLVLIVVCIMGWW) threads the bilayer.

This sequence belongs to the RL11 family. Highly glycosylated.

It localises to the secreted. It is found in the host cell membrane. In terms of biological role, plays a role in modulating the host immune response and affecting host cytokine production. Structurally and functionally homolog of host CEACAM1, induces endothelial cell angiogenesis. This Homo sapiens (Human) protein is CEACAM1-like protein UL7 (UL7).